Here is a 283-residue protein sequence, read N- to C-terminus: Cyclin-C (283 aa).

The region spanning 46–144 (NVIQALGEHL…ILECEFYLLE (99 aa)) is the Cyclin N-terminal domain. Residues 252-283 (TILSKMPKPKPPPNSEGEQGPNGSQNSSYSQS) form a disordered region. The segment covering 272-283 (PNGSQNSSYSQS) has biased composition (polar residues). Ser-275 carries the phosphoserine modification.

This sequence belongs to the cyclin family. Cyclin C subfamily. Component of the Mediator complex, which is composed of MED1, MED4, MED6, MED7, MED8, MED9, MED10, MED11, MED12, MED13, MED13L, MED14, MED15, MED16, MED17, MED18, MED19, MED20, MED21, MED22, MED23, MED24, MED25, MED26, MED27, MED29, MED30, MED31, CCNC, CDK8 and CDC2L6/CDK11. The MED12, MED13, CCNC and CDK8 subunits form a distinct module termed the CDK8 module. Mediator containing the CDK8 module is less active than Mediator lacking this module in supporting transcriptional activation. Individual preparations of the Mediator complex lacking one or more distinct subunits have been variously termed ARC, CRSP, DRIP, PC2, SMCC and TRAP. The cylin/CDK pair formed by CCNC/CDK8 also associates with the large subunit of RNA polymerase II. As to expression, highest levels in pancreas. High levels in heart, liver, skeletal muscle and kidney. Low levels in brain.

It is found in the nucleus. Component of the Mediator complex, a coactivator involved in regulated gene transcription of nearly all RNA polymerase II-dependent genes. Mediator functions as a bridge to convey information from gene-specific regulatory proteins to the basal RNA polymerase II transcription machinery. Mediator is recruited to promoters by direct interactions with regulatory proteins and serves as a scaffold for the assembly of a functional preinitiation complex with RNA polymerase II and the general transcription factors. Binds to and activates cyclin-dependent kinase CDK8 that phosphorylates the CTD (C-terminal domain) of the large subunit of RNA polymerase II (RNAp II), which may inhibit the formation of a transcription initiation complex. This chain is Cyclin-C (CCNC), found in Homo sapiens (Human).